The primary structure comprises 484 residues: MKFIVKLYPEIMMKSKPVRMRFTKMLETNIRNVLKKVDEDAKVQRQWDRIWVKVPNDKPELAQAFGERLACIPGIAHVVQVDEYSFTSVDDIYQQVLPVYRDQIAGKTFCVRVKRTGSHDFNSIEVERYVGGGLNQFTDAIGVRLKNPEVTVNLEIEGDKLYMVTKRIEGLGGFPMATQEDVLSLISGGFDSGVSSYQFIKKGARTHYCFFNLGGAQHEIGVKQVAYHLWKTYGESHKVKFVSVPFEPVVAEILEKIDNGQMGVVLKRMMMRTAARIAERMGIQAIVTGESLGQVSSQTLTNLNVIDRCTDMLILRPLIAMDKQDIINECRRIGTEDFAKSMPEYCGVISQKPTVKAVLAKVEAEETKFSEDLIDRIVEQAVVIDIREIAEQMNTRITETETVVAIDTNEVVIDIRAPEEEENKPLEIEGVEIKRIPFFKLATQFADLDKQKTYLLYCERGVMSKLQALYLIEQGYHNVKVYRP.

Residues 63–167 form the THUMP domain; it reads QAFGERLACI…GDKLYMVTKR (105 aa). ATP-binding positions include 185–186, K267, G289, and Q298; that span reads LI. C346 and C458 are oxidised to a cystine. Residues 406 to 484 enclose the Rhodanese domain; that stretch reads IDTNEVVIDI…GYHNVKVYRP (79 aa). The Cysteine persulfide intermediate role is filled by C458.

Belongs to the ThiI family.

The protein localises to the cytoplasm. It carries out the reaction [ThiI sulfur-carrier protein]-S-sulfanyl-L-cysteine + a uridine in tRNA + 2 reduced [2Fe-2S]-[ferredoxin] + ATP + H(+) = [ThiI sulfur-carrier protein]-L-cysteine + a 4-thiouridine in tRNA + 2 oxidized [2Fe-2S]-[ferredoxin] + AMP + diphosphate. The enzyme catalyses [ThiS sulfur-carrier protein]-C-terminal Gly-Gly-AMP + S-sulfanyl-L-cysteinyl-[cysteine desulfurase] + AH2 = [ThiS sulfur-carrier protein]-C-terminal-Gly-aminoethanethioate + L-cysteinyl-[cysteine desulfurase] + A + AMP + 2 H(+). It participates in cofactor biosynthesis; thiamine diphosphate biosynthesis. Catalyzes the ATP-dependent transfer of a sulfur to tRNA to produce 4-thiouridine in position 8 of tRNAs, which functions as a near-UV photosensor. Also catalyzes the transfer of sulfur to the sulfur carrier protein ThiS, forming ThiS-thiocarboxylate. This is a step in the synthesis of thiazole, in the thiamine biosynthesis pathway. The sulfur is donated as persulfide by IscS. The polypeptide is tRNA sulfurtransferase (Shewanella sp. (strain MR-4)).